Reading from the N-terminus, the 175-residue chain is RNA pyrophosphohydrolase (175 aa).

The 144-residue stretch at 6–149 folds into the Nudix hydrolase domain; sequence GYRPNVGIVI…KRDVYRRVMK (144 aa). Positions 38-59 match the Nudix box motif; sequence GGINAGETAEQAMYRELFEEVG.

It belongs to the Nudix hydrolase family. RppH subfamily. A divalent metal cation is required as a cofactor.

Accelerates the degradation of transcripts by removing pyrophosphate from the 5'-end of triphosphorylated RNA, leading to a more labile monophosphorylated state that can stimulate subsequent ribonuclease cleavage. The protein is RNA pyrophosphohydrolase of Sodalis glossinidius (strain morsitans).